The sequence spans 187 residues: UPF0301 protein Cpha266_0885 (187 aa).

It belongs to the UPF0301 (AlgH) family.

The sequence is that of UPF0301 protein Cpha266_0885 from Chlorobium phaeobacteroides (strain DSM 266 / SMG 266 / 2430).